The following is a 530-amino-acid chain: Equilibrative nucleoside transporter 4 (530 aa).

The segment at 1–21 (MGSVGSQRLEEPSVAGTPDPG) is disordered. The Extracellular segment spans residues 1–68 (MGSVGSQRLE…DEPVPDDRYH (68 aa)). A helical membrane pass occupies residues 69-89 (AIYFAMLLAGVGFLLPYNSFI). Topologically, residues 90-101 (TDVDYLHHKYPG) are cytoplasmic. The helical transmembrane segment at 102-122 (TSIVFDMSLTYILVALAAVLL) threads the bilayer. The Extracellular segment spans residues 123–139 (NNVLVERLTLHTRITAG). The chain crosses the membrane as a helical span at residues 140–160 (YLLALGPLLFISICDVWLQLF). Topologically, residues 161–166 (SRDQAY) are cytoplasmic. A helical transmembrane segment spans residues 167–187 (AINLAAVGTVAFGCTVQQSSF). Over 188 to 231 (YGYTGMLPKRYTQGVMTGESTAGVMISLSRILTKLLLPDERAST) the chain is Extracellular. Residues 232 to 252 (LIFFLVSVALELLCFLLHLLV) traverse the membrane as a helical segment. Residues 253–351 (RRSRFVLFYT…LLLHRYVVAR (99 aa)) are Cytoplasmic-facing. The helical transmembrane segment at 352 to 372 (VIWADMLSIAVTYFITLCLFP) threads the bilayer. Topologically, residues 373 to 381 (GLESEIRHC) are extracellular. Residues 382 to 402 (ILGEWLPILIMAVFNLSDFVG) traverse the membrane as a helical segment. Over 403-416 (KILAALPVDWRGTH) the chain is Cytoplasmic. A helical transmembrane segment spans residues 417–437 (LLACSCLRVVFIPLFILCVYP). The Extracellular portion of the chain corresponds to 438–450 (SGMPALRHPAWPC). A helical membrane pass occupies residues 451–471 (IFSLLMGISNGYFGSVPMILA). At 472–486 (AGKVSPKQRELAGNT) the chain is on the cytoplasmic side. The chain crosses the membrane as a helical span at residues 487-509 (MTVSYMSGLTLGSAVAYCTYSLT). The Extracellular portion of the chain corresponds to 510 to 530 (RDAHGSCLHASTANGSILAGL). N523 carries N-linked (GlcNAc...) asparagine glycosylation.

This sequence belongs to the SLC29A/ENT transporter (TC 2.A.57) family. Post-translationally, N-glycosylated. Mainly expressed in brain and skeletal muscle. In brain, expressed in cerebellum, cerebral cortex, medulla oblongata, occipital pole, frontal and temporal lobes putamen, spinal cord, substancia nigra, hippocampus, caudate nucleus, nucleus accumbens, pons and choroid plexus. Expressed in heart, in both cardiomyocytes and vascular endothelial cells. Also expressed in adrenal gland, small intestine, pancreas, kidney, liver, bone marrow, lymph node. Located in endometrial stroma, where the expression is high in the proliferative phase, decreases during the secretory phase, and is no longer detectable in the menstrual phase.

Its subcellular location is the cell membrane. The protein resides in the apical cell membrane. The enzyme catalyses serotonin(out) = serotonin(in). The catalysed reaction is dopamine(out) = dopamine(in). It carries out the reaction (R)-noradrenaline(out) = (R)-noradrenaline(in). It catalyses the reaction (R)-adrenaline(out) = (R)-adrenaline(in). The enzyme catalyses histamine(out) = histamine(in). The catalysed reaction is tyramine(in) = tyramine(out). It carries out the reaction guanidine(out) = guanidine(in). It catalyses the reaction adenosine(in) = adenosine(out). Activated at acidic pH. Electrogenic voltage-dependent transporter that mediates the transport of a variety of endogenous bioactive amines, cationic xenobiotics and drugs. Utilizes the physiologic inside-negative membrane potential as a driving force to facilitate cellular uptake of organic cations. Functions as a Na(+)- and Cl(-)-independent bidirectional transporter. Substrate transport is pH-dependent and enhanced under acidic condition, which is most likely the result of allosteric changes in the transporter structure. Implicated in monoamine neurotransmitters uptake such as serotonin, dopamine, adrenaline/epinephrine, noradrenaline/norepinephrine, histamine and tyramine, thereby supporting a role in homeostatic regulation of aminergic neurotransmission in the central nervous system. Also responsible for the uptake of bioactive amines and drugs through the blood-cerebrospinal fluid (CSF) barrier, from the CSF into choroid plexus epithelial cells, thereby playing a significant role in the clearance of cationic neurotoxins, xenobiotics and metabolic waste in the brain. Involved in bidirectional transport of the purine nucleoside adenosine and plays a role in the regulation of extracellular adenosine concentrations in cardiac tissues, in particular during ischemia. May be involved in organic cation uptake from the tubular lumen into renal tubular cells, thereby contributing to organic cation reabsorption in the kidney. Also transports guanidine. The polypeptide is Equilibrative nucleoside transporter 4 (Homo sapiens (Human)).